The primary structure comprises 454 residues: Histidine--tRNA ligase (454 aa).

Belongs to the class-II aminoacyl-tRNA synthetase family. In terms of assembly, homodimer.

The protein localises to the cytoplasm. The catalysed reaction is tRNA(His) + L-histidine + ATP = L-histidyl-tRNA(His) + AMP + diphosphate + H(+). This Bacteroides fragilis (strain YCH46) protein is Histidine--tRNA ligase.